Consider the following 66-residue polypeptide: ATP synthase protein 8 (66 aa).

A helical membrane pass occupies residues 8–24; it reads TWLMMIMSMFLALFIIF. At K54 the chain carries N6-acetyllysine; alternate. The residue at position 54 (K54) is an N6-succinyllysine; alternate. N6-acetyllysine is present on K57.

The protein belongs to the ATPase protein 8 family. In terms of assembly, F-type ATPases have 2 components, CF(1) - the catalytic core - and CF(0) - the membrane proton channel. Component of an ATP synthase complex composed of ATP5PB, ATP5MC1, ATP5F1E, ATP5PD, ATP5ME, ATP5PF, ATP5MF, MT-ATP6, MT-ATP8, ATP5F1A, ATP5F1B, ATP5F1D, ATP5F1C, ATP5PO, ATP5MG, ATP5MK and ATP5MJ. Interacts with PRICKLE3.

The protein localises to the mitochondrion membrane. In terms of biological role, mitochondrial membrane ATP synthase (F(1)F(0) ATP synthase or Complex V) produces ATP from ADP in the presence of a proton gradient across the membrane which is generated by electron transport complexes of the respiratory chain. F-type ATPases consist of two structural domains, F(1) - containing the extramembraneous catalytic core and F(0) - containing the membrane proton channel, linked together by a central stalk and a peripheral stalk. During catalysis, ATP synthesis in the catalytic domain of F(1) is coupled via a rotary mechanism of the central stalk subunits to proton translocation. Part of the complex F(0) domain. Minor subunit located with subunit a in the membrane. This is ATP synthase protein 8 (MT-ATP8) from Cervus elaphus hippelaphus (European red deer).